A 326-amino-acid polypeptide reads, in one-letter code: Eukaryotic translation initiation factor 3 subunit I (326 aa).

5 WD repeats span residues 8-47 (GHER…RLGT), 50-89 (GHQG…VIAS), 145-184 (MTES…KVVD), 188-227 (DHSA…CLKT), and 285-326 (GHFG…NIFE).

It belongs to the eIF-3 subunit I family. As to quaternary structure, component of the eukaryotic translation initiation factor 3 (eIF-3) complex. The eIF-3 complex interacts with pix.

The protein localises to the cytoplasm. Its function is as follows. Component of the eukaryotic translation initiation factor 3 (eIF-3) complex, which is involved in protein synthesis of a specialized repertoire of mRNAs and, together with other initiation factors, stimulates binding of mRNA and methionyl-tRNAi to the 40S ribosome. The eIF-3 complex specifically targets and initiates translation of a subset of mRNAs involved in cell proliferation. The polypeptide is Eukaryotic translation initiation factor 3 subunit I (Drosophila simulans (Fruit fly)).